We begin with the raw amino-acid sequence, 146 residues long: UPF0178 protein CTC_02403 (146 aa).

The protein belongs to the UPF0178 family.

In Clostridium tetani (strain Massachusetts / E88), this protein is UPF0178 protein CTC_02403.